We begin with the raw amino-acid sequence, 420 residues long: Diaminobutyrate--2-oxoglutarate transaminase (420 aa).

Position 271 is an N6-(pyridoxal phosphate)lysine (Lys-271).

This sequence belongs to the class-III pyridoxal-phosphate-dependent aminotransferase family. Pyridoxal 5'-phosphate is required as a cofactor.

The catalysed reaction is L-2,4-diaminobutanoate + 2-oxoglutarate = L-aspartate 4-semialdehyde + L-glutamate. Its pathway is amine and polyamine biosynthesis; ectoine biosynthesis; L-ectoine from L-aspartate 4-semialdehyde: step 1/3. Catalyzes reversively the conversion of L-aspartate beta-semialdehyde (ASA) to L-2,4-diaminobutyrate (DABA) by transamination with L-glutamate. This is Diaminobutyrate--2-oxoglutarate transaminase (ectB) from Streptomyces anulatus (Streptomyces chrysomallus).